A 504-amino-acid chain; its full sequence is Glycerol kinase (504 aa).

Thr12 contributes to the ADP binding site. ATP is bound by residues Thr12, Thr13, and Ser14. Thr12 provides a ligand contact to sn-glycerol 3-phosphate. Arg16 provides a ligand contact to ADP. Residues Arg82, Glu83, Tyr134, and Asp244 each contribute to the sn-glycerol 3-phosphate site. The glycerol site is built by Arg82, Glu83, Tyr134, Asp244, and Gln245. Residues Thr266 and Gly309 each contribute to the ADP site. Positions 266, 309, 313, and 410 each coordinate ATP. The ADP site is built by Gly410 and Asn414.

This sequence belongs to the FGGY kinase family. As to quaternary structure, homotetramer and homodimer (in equilibrium).

It catalyses the reaction glycerol + ATP = sn-glycerol 3-phosphate + ADP + H(+). The protein operates within polyol metabolism; glycerol degradation via glycerol kinase pathway; sn-glycerol 3-phosphate from glycerol: step 1/1. Its activity is regulated as follows. Activated by phosphorylation and inhibited by fructose 1,6-bisphosphate (FBP). Its function is as follows. Key enzyme in the regulation of glycerol uptake and metabolism. Catalyzes the phosphorylation of glycerol to yield sn-glycerol 3-phosphate. The chain is Glycerol kinase from Alkaliphilus oremlandii (strain OhILAs) (Clostridium oremlandii (strain OhILAs)).